Reading from the N-terminus, the 297-residue chain is Homoserine kinase (297 aa).

79-89 (PIARGLGSSGA) provides a ligand contact to ATP.

It belongs to the GHMP kinase family. Homoserine kinase subfamily.

The protein localises to the cytoplasm. It catalyses the reaction L-homoserine + ATP = O-phospho-L-homoserine + ADP + H(+). It functions in the pathway amino-acid biosynthesis; L-threonine biosynthesis; L-threonine from L-aspartate: step 4/5. In terms of biological role, catalyzes the ATP-dependent phosphorylation of L-homoserine to L-homoserine phosphate. This Pyrobaculum neutrophilum (strain DSM 2338 / JCM 9278 / NBRC 100436 / V24Sta) (Thermoproteus neutrophilus) protein is Homoserine kinase.